A 457-amino-acid polypeptide reads, in one-letter code: Sensor protein CpxA (457 aa).

Residues 1 to 7 (MIGSLTA) lie on the Cytoplasmic side of the membrane. A helical transmembrane segment spans residues 8-29 (RIFAIFWLTLALVLMLVLMLPK). The Periplasmic segment spans residues 30 to 163 (LDSRQMTELL…SDFINLLFDR (134 aa)). Residues 164 to 184 (PLLLLIVTMLVSTPLLLWLAW) form a helical membrane-spanning segment. The HAMP domain maps to 185–237 (SLAKPARKLKNAADEVAQGNLRQHPELEAGPQEFLAAGASFNQMVTALERMMT). The Cytoplasmic segment spans residues 185–457 (SLAKPARKLK…VIWLPLYKRS (273 aa)). The Histidine kinase domain maps to 245–455 (DISHELRTPL…RLVIWLPLYK (211 aa)). At His-248 the chain carries Phosphohistidine; by autocatalysis.

It is found in the cell inner membrane. The enzyme catalyses ATP + protein L-histidine = ADP + protein N-phospho-L-histidine.. Its function is as follows. This protein is involved in several diverse cellular processes, such as the functioning of acetohydroxyacid synthetase I, in the biosynthesis of isoleucine and valine, the TraJ protein activation activity for tra gene expression in F plasmid, and the synthesis, translocation, or stability of cell envelope proteins. Activates CpxR by phosphorylation. The chain is Sensor protein CpxA (cpxA) from Escherichia coli O157:H7.